The following is a 219-amino-acid chain: MNLNELKKKAAWAALDYIYPGTVIGVGTGSTVFYFIQALSTVKHLISGAVSSSNSSTVLLKKNGIRVLDLNTFDFLEIYVDSADEINNDMQMIKGGGAALTKEKIIAAMSKKFVCIIDESKKVNILGTFPLPIEIIPIAFSYISKEILKIGGQPKLRENIITDNGNVIIDVYNLFINDPISVEKKINSLPGVVSVGLFASRVADVVLIGTQKGVEIIKN.

Residues Thr-28–Thr-31, Asp-81–Asp-84, and Lys-94–Gly-97 contribute to the substrate site. Glu-103 acts as the Proton acceptor in catalysis. Substrate is bound at residue Lys-121.

This sequence belongs to the ribose 5-phosphate isomerase family. As to quaternary structure, homodimer.

It carries out the reaction aldehydo-D-ribose 5-phosphate = D-ribulose 5-phosphate. The protein operates within carbohydrate degradation; pentose phosphate pathway; D-ribose 5-phosphate from D-ribulose 5-phosphate (non-oxidative stage): step 1/1. Catalyzes the reversible conversion of ribose-5-phosphate to ribulose 5-phosphate. The polypeptide is Ribose-5-phosphate isomerase A (Buchnera aphidicola subsp. Schizaphis graminum (strain Sg)).